A 470-amino-acid polypeptide reads, in one-letter code: ATP synthase subunit beta (470 aa).

An ATP-binding site is contributed by 155–162 (GGAGVGKT).

It belongs to the ATPase alpha/beta chains family. In terms of assembly, F-type ATPases have 2 components, CF(1) - the catalytic core - and CF(0) - the membrane proton channel. CF(1) has five subunits: alpha(3), beta(3), gamma(1), delta(1), epsilon(1). CF(0) has three main subunits: a(1), b(2) and c(9-12). The alpha and beta chains form an alternating ring which encloses part of the gamma chain. CF(1) is attached to CF(0) by a central stalk formed by the gamma and epsilon chains, while a peripheral stalk is formed by the delta and b chains.

Its subcellular location is the cell membrane. It catalyses the reaction ATP + H2O + 4 H(+)(in) = ADP + phosphate + 5 H(+)(out). Its function is as follows. Produces ATP from ADP in the presence of a proton gradient across the membrane. The catalytic sites are hosted primarily by the beta subunits. This Staphylococcus aureus (strain MW2) protein is ATP synthase subunit beta.